A 301-amino-acid polypeptide reads, in one-letter code: Probable alpha-L-glutamate ligase (301 aa).

The region spanning 104–287 (LQLLARKGVG…VAGMIINWTE (184 aa)) is the ATP-grasp domain. ATP contacts are provided by residues lysine 141, 178 to 179 (EF), aspartate 187, and 211 to 213 (RSN). Residues aspartate 248, glutamate 260, and asparagine 262 each coordinate Mg(2+). Aspartate 248, glutamate 260, and asparagine 262 together coordinate Mn(2+).

The protein belongs to the RimK family. The cofactor is Mg(2+). Mn(2+) serves as cofactor.

The protein is Probable alpha-L-glutamate ligase of Marinobacter nauticus (strain ATCC 700491 / DSM 11845 / VT8) (Marinobacter aquaeolei).